The sequence spans 605 residues: Elongation factor 4 (605 aa).

The tr-type G domain maps to 11-193; it reads KNIRNFSIIA…RLVDVIPAPE (183 aa). GTP is bound by residues 23 to 28 and 140 to 143; these read DHGKST and NKID.

This sequence belongs to the TRAFAC class translation factor GTPase superfamily. Classic translation factor GTPase family. LepA subfamily.

It localises to the cell inner membrane. The enzyme catalyses GTP + H2O = GDP + phosphate + H(+). Functionally, required for accurate and efficient protein synthesis under certain stress conditions. May act as a fidelity factor of the translation reaction, by catalyzing a one-codon backward translocation of tRNAs on improperly translocated ribosomes. Back-translocation proceeds from a post-translocation (POST) complex to a pre-translocation (PRE) complex, thus giving elongation factor G a second chance to translocate the tRNAs correctly. Binds to ribosomes in a GTP-dependent manner. This Acinetobacter baylyi (strain ATCC 33305 / BD413 / ADP1) protein is Elongation factor 4.